Reading from the N-terminus, the 452-residue chain is Bifunctional protein GlmU (452 aa).

The interval 1–232 is pyrophosphorylase; the sequence is MTARNSLTIV…EDEVRGINTK (232 aa). UDP-N-acetyl-alpha-D-glucosamine-binding positions include 11–14, lysine 25, glutamine 78, and 83–84; these read LAAG and GT. Aspartate 108 is a Mg(2+) binding site. The UDP-N-acetyl-alpha-D-glucosamine site is built by glycine 144, glutamate 158, asparagine 173, and asparagine 230. Asparagine 230 contacts Mg(2+). A linker region spans residues 233 to 253; that stretch reads AQLAEAETVMQTRLRLAAMAA. Residues 254 to 452 form an N-acetyltransferase region; the sequence is GVTLIAPETV…KSRHRKPKAH (199 aa). 2 residues coordinate UDP-N-acetyl-alpha-D-glucosamine: arginine 319 and lysine 337. The active-site Proton acceptor is histidine 349. Residues tyrosine 352 and asparagine 363 each contribute to the UDP-N-acetyl-alpha-D-glucosamine site. Acetyl-CoA-binding positions include alanine 366, 372–373, serine 391, serine 409, and arginine 426; that span reads NY.

The protein in the N-terminal section; belongs to the N-acetylglucosamine-1-phosphate uridyltransferase family. In the C-terminal section; belongs to the transferase hexapeptide repeat family. Homotrimer. Requires Mg(2+) as cofactor.

The protein resides in the cytoplasm. The catalysed reaction is alpha-D-glucosamine 1-phosphate + acetyl-CoA = N-acetyl-alpha-D-glucosamine 1-phosphate + CoA + H(+). It catalyses the reaction N-acetyl-alpha-D-glucosamine 1-phosphate + UTP + H(+) = UDP-N-acetyl-alpha-D-glucosamine + diphosphate. The protein operates within nucleotide-sugar biosynthesis; UDP-N-acetyl-alpha-D-glucosamine biosynthesis; N-acetyl-alpha-D-glucosamine 1-phosphate from alpha-D-glucosamine 6-phosphate (route II): step 2/2. It functions in the pathway nucleotide-sugar biosynthesis; UDP-N-acetyl-alpha-D-glucosamine biosynthesis; UDP-N-acetyl-alpha-D-glucosamine from N-acetyl-alpha-D-glucosamine 1-phosphate: step 1/1. It participates in bacterial outer membrane biogenesis; LPS lipid A biosynthesis. Its function is as follows. Catalyzes the last two sequential reactions in the de novo biosynthetic pathway for UDP-N-acetylglucosamine (UDP-GlcNAc). The C-terminal domain catalyzes the transfer of acetyl group from acetyl coenzyme A to glucosamine-1-phosphate (GlcN-1-P) to produce N-acetylglucosamine-1-phosphate (GlcNAc-1-P), which is converted into UDP-GlcNAc by the transfer of uridine 5-monophosphate (from uridine 5-triphosphate), a reaction catalyzed by the N-terminal domain. The chain is Bifunctional protein GlmU from Rhodopseudomonas palustris (strain TIE-1).